Here is a 299-residue protein sequence, read N- to C-terminus: GTPase Era (299 aa).

Residues Lys4 to Glu171 form the Era-type G domain. Positions Gly12–Ser19 are G1. Residue Gly12–Ser19 coordinates GTP. Residues Gln38–Asn42 form a G2 region. Residues Asp59–Gly62 are G3. Residues Asp59–Ile63 and Asn121–Asp124 contribute to the GTP site. The interval Asn121–Asp124 is G4. Positions Ile150–Ala152 are G5. Residues Thr202–Lys280 enclose the KH type-2 domain.

Belongs to the TRAFAC class TrmE-Era-EngA-EngB-Septin-like GTPase superfamily. Era GTPase family. As to quaternary structure, monomer.

It localises to the cytoplasm. It is found in the cell membrane. In terms of biological role, an essential GTPase that binds both GDP and GTP, with rapid nucleotide exchange. Plays a role in 16S rRNA processing and 30S ribosomal subunit biogenesis and possibly also in cell cycle regulation and energy metabolism. This Streptococcus agalactiae serotype III (strain NEM316) protein is GTPase Era.